A 230-amino-acid polypeptide reads, in one-letter code: tRNA (guanine-N(7)-)-methyltransferase (230 aa).

S-adenosyl-L-methionine contacts are provided by Glu61, Glu86, Asp113, and Asp135. Asp135 is a catalytic residue. Residues Lys139, Asp171, and 209–212 (TRYE) contribute to the substrate site.

It belongs to the class I-like SAM-binding methyltransferase superfamily. TrmB family.

The catalysed reaction is guanosine(46) in tRNA + S-adenosyl-L-methionine = N(7)-methylguanosine(46) in tRNA + S-adenosyl-L-homocysteine. It functions in the pathway tRNA modification; N(7)-methylguanine-tRNA biosynthesis. In terms of biological role, catalyzes the formation of N(7)-methylguanine at position 46 (m7G46) in tRNA. In Azorhizobium caulinodans (strain ATCC 43989 / DSM 5975 / JCM 20966 / LMG 6465 / NBRC 14845 / NCIMB 13405 / ORS 571), this protein is tRNA (guanine-N(7)-)-methyltransferase.